A 574-amino-acid chain; its full sequence is E3 ubiquitin-protein ligase TRIM23 (574 aa).

Residues 31–76 form an RING-type; degenerate zinc finger; that stretch reads CGVCEDVFSLQGDKVPRLLLCGHTVCHDCLTRLPLHGRAIRCPFDR. Residues 122–168 form a B box-type; degenerate zinc finger; sequence ESIIRCDEDEAHVASVYCTVCATHLCSDCSQVTHSTKTLAKHRRVPL. Residues 352–379 adopt a coiled-coil conformation; sequence RVVLAKQEITRLLETLQKQQQQFTEVAD. Residues 390–574 are ARF-like; sequence TFTKDNRVHI…LVAAGVLDVA (185 aa). Residues 411–418, 454–458, and 513–516 contribute to the GTP site; these read GLDGAGKT, DVGGK, and NKQD.

The protein in the C-terminal section; belongs to the small GTPase superfamily. Arf family. As to quaternary structure, homodimer. Interacts with PSCD1. Interacts with UBE2D2. Interacts with TBK1 (via N-terminal kinase domain) and p62/SQSTM1.

The protein resides in the cytoplasm. It is found in the endomembrane system. Its subcellular location is the golgi apparatus membrane. It localises to the lysosome membrane. It catalyses the reaction S-ubiquitinyl-[E2 ubiquitin-conjugating enzyme]-L-cysteine + [acceptor protein]-L-lysine = [E2 ubiquitin-conjugating enzyme]-L-cysteine + N(6)-ubiquitinyl-[acceptor protein]-L-lysine.. It participates in protein modification; protein ubiquitination. In terms of biological role, acts as an E3 ubiquitin-protein ligase. Plays an essential role in autophagy activation during viral infection. Mechanistically, activates TANK-binding kinase 1/TBK1 by facilitating its dimerization and ability to phosphorylate the selective autophagy receptor SQSTM1. In order to achieve this function, TRIM23 mediates 'Lys-27'-linked auto-ubiquitination of its ADP-ribosylation factor (ARF) domain to induce its GTPase activity and its recruitment to autophagosomes. The chain is E3 ubiquitin-protein ligase TRIM23 (Trim23) from Mus musculus (Mouse).